The following is a 112-amino-acid chain: Ribosome-binding factor A (112 aa).

Belongs to the RbfA family. In terms of assembly, monomer. Binds 30S ribosomal subunits, but not 50S ribosomal subunits or 70S ribosomes.

It localises to the cytoplasm. Functionally, one of several proteins that assist in the late maturation steps of the functional core of the 30S ribosomal subunit. Associates with free 30S ribosomal subunits (but not with 30S subunits that are part of 70S ribosomes or polysomes). Required for efficient processing of 16S rRNA. May interact with the 5'-terminal helix region of 16S rRNA. The chain is Ribosome-binding factor A from Ruthia magnifica subsp. Calyptogena magnifica.